A 254-amino-acid chain; its full sequence is AA9 family lytic polysaccharide monooxygenase A (254 aa).

An N-terminal signal peptide occupies residues 1 to 19; sequence MKYSILGLTALSFVASAAA. Position 20 (H20) interacts with Cu(2+). Residue H20 is modified to Methylhistidine. A (1,4-beta-D-glucosyl)n-binding site is contributed by V28. N52 carries N-linked (GlcNAc...) asparagine glycosylation. Residues C60 and C186 are joined by a disulfide bond. The (1,4-beta-D-glucosyl)n site is built by V66, V67, D77, and N86. Cu(2+) is bound at residue H97. Residue N129 is glycosylated (N-linked (GlcNAc...) asparagine). (1,4-beta-D-glucosyl)n is bound by residues V148 and R159. 2 residues coordinate O2: H166 and Q181. Residue Y183 coordinates Cu(2+).

This sequence belongs to the polysaccharide monooxygenase AA9 family. It depends on Cu(2+) as a cofactor. Post-translationally, the catalytically essential N-terminal histidine His-20 is post-translationally modified by methylation to prevent protonation of the histidine side chain, and protect the critical active site of the enzyme from oxidative damage.

The protein localises to the secreted. It catalyses the reaction [(1-&gt;4)-beta-D-glucosyl]n+m + reduced acceptor + O2 = 4-dehydro-beta-D-glucosyl-[(1-&gt;4)-beta-D-glucosyl]n-1 + [(1-&gt;4)-beta-D-glucosyl]m + acceptor + H2O.. The polyphenol cinnamtannin B1 contained in methanolic extract of Cinnamomum cassia (cinnamon) acts as an inhibitor of catalytic activity. In terms of biological role, lytic polysaccharide monooxygenase (LPMO) that depolymerizes crystalline and amorphous polysaccharides via the oxidation of scissile alpha- or beta-(1-4)-glycosidic bonds, yielding C1 or C4 oxidation product. Catalysis by LPMOs requires the reduction of the active-site copper from Cu(II) to Cu(I) by a reducing agent and H(2)O(2) or O(2) as a cosubstrate. Is able to cleave phosphoric acid swollen cellulose (PASC) in the presence of a reducing agent, yielding a range of cellooligosaccharides dominated by cellobiose and cellotriose. Activity is less sensitive to the reducing agent potential when cleaving xylan, suggesting that distinct catalytic mechanisms exist for xylan and glucan cleavage. The sequence is that of AA9 family lytic polysaccharide monooxygenase A from Panus similis (Lentinoid fungus).